The primary structure comprises 338 residues: Methionine synthase (338 aa).

4 residues coordinate Zn(2+): His-210, Cys-212, Glu-234, and Cys-294.

The protein belongs to the archaeal MetE family. The cofactor is Zn(2+).

It functions in the pathway amino-acid biosynthesis; L-methionine biosynthesis via de novo pathway. Functionally, catalyzes the transfer of a methyl group to L-homocysteine resulting in methionine formation. The physiological methyl donor is unknown. The sequence is that of Methionine synthase from Pyrococcus horikoshii (strain ATCC 700860 / DSM 12428 / JCM 9974 / NBRC 100139 / OT-3).